Consider the following 414-residue polypeptide: TAR DNA-binding protein 43 (414 aa).

Residues lysine 79, lysine 84, lysine 95, lysine 102, and lysine 181 each participate in a glycyl lysine isopeptide (Lys-Gly) (interchain with G-Cter in SUMO2) cross-link. RRM domains are found at residues 104 to 200 and 191 to 262; these read SDLI…RCTE and RKVF…NAEP. The residue at position 183 (serine 183) is a Phosphoserine. The segment at 216–414 is interaction with UBQLN2; that stretch reads DVMDVFIPKP…MDSKSSGWGM (199 aa). Residues 261–274 are compositionally biased toward basic and acidic residues; the sequence is EPKHNSNRQLERSG. Disordered stretches follow at residues 261-303 and 341-373; these read EPKH…GNNQ and ASQQNQSGPSGNNQNQGNMQREPNQAFGSGNNS. Lysine 263 is covalently cross-linked (Glycyl lysine isopeptide (Lys-Gly) (interchain with G-Cter in SUMO2)). The span at 275 to 303 shows a compositional bias: gly residues; the sequence is RFGGNPGGFGNQGGFGNSRGGGAGLGNNQ. Residue serine 292 is modified to Phosphoserine. Position 293 is an omega-N-methylarginine (arginine 293). A compositionally biased stretch (low complexity) spans 342–358; the sequence is SQQNQSGPSGNNQNQGN.

As to quaternary structure, monomer and component of the SFPQ-NONO complex, which is probably a heterotetramer of two 52 kDa (NONO) and two 100 kDa (SFPQ) subunits. NONO is a component of spliceosome and U5.4/6 snRNP complexes. Interacts with CPNE4 (via VWFA domain). Forms heterodimers with PSPC1; this involves formation of a coiled coil domain by helices from both proteins. Part of complex consisting of SFPQ, NONO and MATR3. Part of a complex consisting of SFPQ, NONO and NR5A1. Part of a complex consisting of SFPQ, NONO and TOP1. Interacts with SPI1. Interacts with RNF43. Interacts with PER1 and PER2. Part of the HDP-RNP complex composed of at least HEXIM1, PRKDC, XRCC5, XRCC6, paraspeckle proteins (SFPQ, NONO, PSPC1, RBM14, and MATR3) and NEAT1 RNA. Interacts (via second RRM domain) with WASL; the interaction is direct. Component of a multiprotein complex with WASL and SFPQ. Interacts with ERCC6. Interacts (via DNA-binding domain) with TET1. Hyperphosphorylated. In terms of processing, ubiquitinated.

It is found in the nucleus. The protein localises to the nucleolus. Its subcellular location is the nucleus speckle. The protein resides in the chromosome. It localises to the mitochondrion. Functionally, DNA- and RNA binding protein, involved in several nuclear processes. Binds the conventional octamer sequence in double-stranded DNA. Also binds single-stranded DNA and RNA at a site independent of the duplex site. Involved in pre-mRNA splicing, probably as a heterodimer with SFPQ. Interacts with U5 snRNA, probably by binding to a purine-rich sequence located on the 3' side of U5 snRNA stem 1b. Together with PSPC1, required for the formation of nuclear paraspeckles. The SFPQ-NONO heteromer associated with MATR3 may play a role in nuclear retention of defective RNAs. The SFPQ-NONO heteromer may be involved in DNA unwinding by modulating the function of topoisomerase I/TOP1. The SFPQ-NONO heteromer may be involved in DNA non-homologous end joining (NHEJ) required for double-strand break repair and V(D)J recombination and may stabilize paired DNA ends. In vitro, the complex strongly stimulates DNA end joining, binds directly to the DNA substrates and cooperates with the Ku70/G22P1-Ku80/XRCC5 (Ku) dimer to establish a functional preligation complex. NONO is involved in transcriptional regulation. The SFPQ-NONO-NR5A1 complex binds to the CYP17 promoter and regulates basal and cAMP-dependent transcriptional activity. NONO binds to an enhancer element in long terminal repeats of endogenous intracisternal A particles (IAPs) and activates transcription. Regulates the circadian clock by repressing the transcriptional activator activity of the CLOCK-BMAL1 heterodimer. Important for the functional organization of GABAergic synapses. Plays a specific and important role in the regulation of synaptic RNAs and GPHN/gephyrin scaffold structure, through the regulation of GABRA2 transcript. Plays a key role during neuronal differentiation by recruiting TET1 to genomic loci and thereby regulating 5-hydroxymethylcytosine levels. Plays a role in the regulation of DNA virus-mediated innate immune response by assembling into the HDP-RNP complex, a complex that serves as a platform for IRF3 phosphorylation and subsequent innate immune response activation through the cGAS-STING pathway. This chain is TAR DNA-binding protein 43 (TARDBP), found in Pongo abelii (Sumatran orangutan).